Reading from the N-terminus, the 152-residue chain is Gamma-glutamylaminecyclotransferase C (152 aa).

A substrate-binding site is contributed by 9 to 12 (YGSL). The Proton acceptor role is filled by glutamate 84.

It belongs to the gamma-glutamylcyclotransferase family.

It catalyses the reaction epsilon-(gamma-L-glutamyl)-L-lysine = 5-oxo-L-proline + L-lysine. Functionally, may contribute to degradation of proteins cross-linked by transglutaminases by degrading the cross-link between a lysine and a glutamic acid residue. Catalyzes the formation of 5-oxo-L-proline from L-gamma-glutamyl-L-epsilon-lysine. This Danio rerio (Zebrafish) protein is Gamma-glutamylaminecyclotransferase C (ggact.3).